The primary structure comprises 232 residues: Ribonuclease HII (232 aa).

Residues 26–218 form the RNase H type-2 domain; the sequence is RILCGVDEAG…VRRALEGMSA (193 aa). Residues Asp32, Glu33, and Asp127 each contribute to the a divalent metal cation site.

The protein belongs to the RNase HII family. It depends on Mn(2+) as a cofactor. Mg(2+) is required as a cofactor.

The protein resides in the cytoplasm. It carries out the reaction Endonucleolytic cleavage to 5'-phosphomonoester.. Functionally, endonuclease that specifically degrades the RNA of RNA-DNA hybrids. This chain is Ribonuclease HII, found in Ralstonia pickettii (strain 12J).